Reading from the N-terminus, the 142-residue chain is Large ribosomal subunit protein uL13 (142 aa).

The protein belongs to the universal ribosomal protein uL13 family. As to quaternary structure, part of the 50S ribosomal subunit.

Functionally, this protein is one of the early assembly proteins of the 50S ribosomal subunit, although it is not seen to bind rRNA by itself. It is important during the early stages of 50S assembly. This is Large ribosomal subunit protein uL13 from Stenotrophomonas maltophilia (strain K279a).